A 101-amino-acid chain; its full sequence is uncharacterized protein (101 aa).

Helical transmembrane passes span Ile-3 to Phe-23 and Val-68 to Ile-88.

It localises to the cell membrane. This is an uncharacterized protein from Ureaplasma parvum serovar 3 (strain ATCC 700970).